Reading from the N-terminus, the 121-residue chain is Phosphoribosyl-AMP cyclohydrolase (121 aa).

D76 contributes to the Mg(2+) binding site. Residue C77 participates in Zn(2+) binding. Residues D78 and D80 each contribute to the Mg(2+) site. Positions 93 and 100 each coordinate Zn(2+).

This sequence belongs to the PRA-CH family. In terms of assembly, homodimer. The cofactor is Mg(2+). Requires Zn(2+) as cofactor.

It localises to the cytoplasm. It catalyses the reaction 1-(5-phospho-beta-D-ribosyl)-5'-AMP + H2O = 1-(5-phospho-beta-D-ribosyl)-5-[(5-phospho-beta-D-ribosylamino)methylideneamino]imidazole-4-carboxamide. The protein operates within amino-acid biosynthesis; L-histidine biosynthesis; L-histidine from 5-phospho-alpha-D-ribose 1-diphosphate: step 3/9. Catalyzes the hydrolysis of the adenine ring of phosphoribosyl-AMP. This is Phosphoribosyl-AMP cyclohydrolase from Paracoccus denitrificans (strain Pd 1222).